Consider the following 185-residue polypeptide: Ribosome-recycling factor (185 aa).

Belongs to the RRF family.

The protein localises to the cytoplasm. Its function is as follows. Responsible for the release of ribosomes from messenger RNA at the termination of protein biosynthesis. May increase the efficiency of translation by recycling ribosomes from one round of translation to another. In Hydrogenovibrio crunogenus (strain DSM 25203 / XCL-2) (Thiomicrospira crunogena), this protein is Ribosome-recycling factor.